We begin with the raw amino-acid sequence, 411 residues long: Phosphopentomutase (411 aa).

Mn(2+) contacts are provided by D14, D306, H311, D347, H348, and H359.

Belongs to the phosphopentomutase family. Requires Mn(2+) as cofactor.

It is found in the cytoplasm. It carries out the reaction 2-deoxy-alpha-D-ribose 1-phosphate = 2-deoxy-D-ribose 5-phosphate. The enzyme catalyses alpha-D-ribose 1-phosphate = D-ribose 5-phosphate. The protein operates within carbohydrate degradation; 2-deoxy-D-ribose 1-phosphate degradation; D-glyceraldehyde 3-phosphate and acetaldehyde from 2-deoxy-alpha-D-ribose 1-phosphate: step 1/2. Its function is as follows. Isomerase that catalyzes the conversion of deoxy-ribose 1-phosphate (dRib-1-P) and ribose 1-phosphate (Rib-1-P) to deoxy-ribose 5-phosphate (dRib-5-P) and ribose 5-phosphate (Rib-5-P), respectively. This Lactococcus lactis subsp. cremoris (strain MG1363) protein is Phosphopentomutase.